The chain runs to 177 residues: Large ribosomal subunit protein uL16 (177 aa).

It belongs to the universal ribosomal protein uL16 family.

This Natronomonas pharaonis (strain ATCC 35678 / DSM 2160 / CIP 103997 / JCM 8858 / NBRC 14720 / NCIMB 2260 / Gabara) (Halobacterium pharaonis) protein is Large ribosomal subunit protein uL16.